A 79-amino-acid polypeptide reads, in one-letter code: Peptide Im-5 (79 aa).

The first 23 residues, 1–23, serve as a signal peptide directing secretion; it reads MKYRKQLLVLFFAYFLVVNESEA. A propeptide spanning residues 49 to 79 is cleaved from the precursor; it reads RALMKRDLQDRMDPYQRNLKLDRYLKQLALD.

Belongs to the non-disulfide-bridged peptide (NDBP) superfamily. Medium-length antimicrobial peptide (group 3) family. In terms of tissue distribution, expressed by the venom gland.

The protein localises to the secreted. The protein resides in the target cell membrane. Its function is as follows. Antimicrobial peptide that may act by disrupting the integrity of the bacterial cell membrane. Has antibacterial activity against Gram-negative bacterium E.coli NBRC 3972 (MIC=10 uM) and against Gram-positive bacteria S.aureus NBRC 13276 (MIC=2.5-5 uM) and B.subtilis NBRC 3009 (MIC=0.5-1 uM). Also shows potent activity against antibiotic-sensitive and -resistant Acinetobacter baumannii (MIC=1.8-3.6 uM). Shows cytolytic activity against human and sheep erythrocytes. Toxic to cricket A.domestica. The polypeptide is Peptide Im-5 (Isometrus maculatus (Lesser brown scorpion)).